The following is a 394-amino-acid chain: NAD(P)H-quinone oxidoreductase subunit H (394 aa).

Belongs to the complex I 49 kDa subunit family. NDH-1 can be composed of about 15 different subunits; different subcomplexes with different compositions have been identified which probably have different functions.

The protein resides in the cellular thylakoid membrane. It catalyses the reaction a plastoquinone + NADH + (n+1) H(+)(in) = a plastoquinol + NAD(+) + n H(+)(out). The catalysed reaction is a plastoquinone + NADPH + (n+1) H(+)(in) = a plastoquinol + NADP(+) + n H(+)(out). In terms of biological role, NDH-1 shuttles electrons from an unknown electron donor, via FMN and iron-sulfur (Fe-S) centers, to quinones in the respiratory and/or the photosynthetic chain. The immediate electron acceptor for the enzyme in this species is believed to be plastoquinone. Couples the redox reaction to proton translocation, and thus conserves the redox energy in a proton gradient. Cyanobacterial NDH-1 also plays a role in inorganic carbon-concentration. The chain is NAD(P)H-quinone oxidoreductase subunit H from Prochlorococcus marinus (strain NATL2A).